The following is a 145-amino-acid chain: MIALIQRVTQARVTIDNEVAGAIGPGLLILLGVERQDDEQKAAKLCERVLAYRIFSDEQGKMNLNVRQSGGRVLVVSQFTLAVDTDRGLRPGFSRGAAPADARRLYDDFTDRCRQTGIRTETGRFGADMQVALVNDGPVTFWLQV.

The short motif at glycine 137–proline 138 is the Gly-cisPro motif, important for rejection of L-amino acids element.

This sequence belongs to the DTD family. As to quaternary structure, homodimer.

It localises to the cytoplasm. The catalysed reaction is glycyl-tRNA(Ala) + H2O = tRNA(Ala) + glycine + H(+). It carries out the reaction a D-aminoacyl-tRNA + H2O = a tRNA + a D-alpha-amino acid + H(+). An aminoacyl-tRNA editing enzyme that deacylates mischarged D-aminoacyl-tRNAs. Also deacylates mischarged glycyl-tRNA(Ala), protecting cells against glycine mischarging by AlaRS. Acts via tRNA-based rather than protein-based catalysis; rejects L-amino acids rather than detecting D-amino acids in the active site. By recycling D-aminoacyl-tRNA to D-amino acids and free tRNA molecules, this enzyme counteracts the toxicity associated with the formation of D-aminoacyl-tRNA entities in vivo and helps enforce protein L-homochirality. The sequence is that of D-aminoacyl-tRNA deacylase from Sodalis glossinidius (strain morsitans).